The following is a 182-amino-acid chain: Probable RNA 2'-phosphotransferase (182 aa).

It belongs to the KptA/TPT1 family.

Removes the 2'-phosphate from RNA via an intermediate in which the phosphate is ADP-ribosylated by NAD followed by a presumed transesterification to release the RNA and generate ADP-ribose 1''-2''-cyclic phosphate (APPR&gt;P). May function as an ADP-ribosylase. The sequence is that of Probable RNA 2'-phosphotransferase from Herpetosiphon aurantiacus (strain ATCC 23779 / DSM 785 / 114-95).